The following is a 553-amino-acid chain: Probable malate:quinone oxidoreductase (553 aa).

Residues 534-543 (QLKPQVQPQP) show a composition bias toward low complexity. The disordered stretch occupies residues 534–553 (QLKPQVQPQPAHKAVADIAL).

It belongs to the MQO family. Requires FAD as cofactor.

It catalyses the reaction (S)-malate + a quinone = a quinol + oxaloacetate. The protein operates within carbohydrate metabolism; tricarboxylic acid cycle; oxaloacetate from (S)-malate (quinone route): step 1/1. The protein is Probable malate:quinone oxidoreductase of Citrobacter koseri (strain ATCC BAA-895 / CDC 4225-83 / SGSC4696).